We begin with the raw amino-acid sequence, 714 residues long: Cadherin-13 (714 aa).

Residues 1-22 (MQPRTPLTLCVLLSQVLLVTSA) form the signal peptide. The propeptide occupies 23–138 (DDLECTPGFQ…RTSPVPRQKR (116 aa)). Cadherin domains are found at residues 143–245 (SPIL…RPIF), 246–363 (REGP…SPKF), 364–477 (TKKE…GPVF), 478–585 (YPDP…APVI), and 586–680 (YPTV…VQVC). The disordered stretch occupies residues 156 to 183 (PRDVGKVVDSDRPEGSKFRLTGKGVDQD). Residues 158-172 (DVGKVVDSDRPEGSK) show a composition bias toward basic and acidic residues. N-linked (GlcNAc...) asparagine glycosylation is found at asparagine 382, asparagine 489, asparagine 500, asparagine 530, asparagine 598, asparagine 638, and asparagine 671. Glycine 693 is lipidated: GPI-anchor amidated glycine. The propeptide at 694 to 714 (ALHLSLSLLLLFSLLSLLSGL) is removed in mature form.

By contrast to classical cadherins, homodimerization in trans is not mediated by cadherin EC1 domain strand-swapping, but instead through a homophilic adhesive interface which joins two elongated EC1-EC2 domains through a region near their Ca2+-binding sites to form a tetrahedral, X-like shape.

The protein resides in the cell membrane. Its subcellular location is the cytoplasm. In terms of biological role, cadherins are calcium-dependent cell adhesion proteins. They preferentially interact with themselves in a homophilic manner in connecting cells; cadherins may thus contribute to the sorting of heterogeneous cell types. May act as a negative regulator of neural cell growth. The protein is Cadherin-13 (Cdh13) of Mus musculus (Mouse).